We begin with the raw amino-acid sequence, 153 residues long: Protein ElaA (153 aa).

One can recognise an N-acetyltransferase domain in the interval 7-151; it reads LHHSELSVSQ…PHIGMAREVI (145 aa).

Belongs to the UPF0039 (ElaA) family.

The protein is Protein ElaA (elaA) of Escherichia coli (strain K12).